The sequence spans 268 residues: Zinc finger protein SNAI2 (268 aa).

The interval 1–20 (MPRSFLVKKHFNASKKPNYS) is SNAG domain. The disordered stretch occupies residues 80–117 (SSSLGRVSPPPPSDTSSKDHSGSESPISDEEERLQSKL). 4 consecutive C2H2-type zinc fingers follow at residues 128 to 150 (FQCN…KQLH), 159 to 181 (FSCK…IRTH), 185 to 207 (CVCK…IRTH), and 213 to 235 (FSCP…LQTH). Residues 241-264 (YQCKNCSKTFSRMSLLHKHEESGC) form a C2H2-type 5; atypical zinc finger.

It belongs to the snail C2H2-type zinc-finger protein family. In terms of assembly, interacts (via SNAG domain) with LIMD1 (via LIM domains), WTIP (via LIM domains) and AJUBA (via LIM domains). Interacts (via zinc fingers) with KPNA2, KPNB1, and TNPO1. May interact (via zinc fingers) with IPO7. Post-translationally, phosphorylated by GSK3B. Once phosphorylated, it becomes a target for ubiquitination. Ubiquitinated by the SCF(FBXO11) complex; ubiquitination requires previous GSK3B-mediated SNAI2 phosphorylation. In terms of tissue distribution, expressed in most adult human tissues, including spleen, thymus, prostate, testis, ovary, small intestine, colon, heart, brain, placenta, lung, liver, skeletal muscle, kidney and pancreas. Not detected in peripheral blood leukocyte. Expressed in the dermis and in all layers of the epidermis, with high levels of expression in the basal layers (at protein level). Expressed in osteoblasts (at protein level). Expressed in mesenchymal stem cells (at protein level). Expressed in breast tumor cells (at protein level).

It is found in the nucleus. It localises to the cytoplasm. Transcriptional repressor that modulates both activator-dependent and basal transcription. Involved in the generation and migration of neural crest cells. Plays a role in mediating RAF1-induced transcriptional repression of the TJ protein, occludin (OCLN) and subsequent oncogenic transformation of epithelial cells. Represses BRCA2 expression by binding to its E2-box-containing silencer and recruiting CTBP1 and HDAC1 in breast cells. In epidermal keratinocytes, binds to the E-box in ITGA3 promoter and represses its transcription. Involved in the regulation of ITGB1 and ITGB4 expression and cell adhesion and proliferation in epidermal keratinocytes. Binds to E-box2 domain of BSG and activates its expression during TGFB1-induced epithelial-mesenchymal transition (EMT) in hepatocytes. Represses E-Cadherin/CDH1 transcription via E-box elements. Involved in osteoblast maturation. Binds to RUNX2 and SOC9 promoters and may act as a positive and negative transcription regulator, respectively, in osteoblasts. Binds to CXCL12 promoter via E-box regions in mesenchymal stem cells and osteoblasts. Plays an essential role in TWIST1-induced EMT and its ability to promote invasion and metastasis. The chain is Zinc finger protein SNAI2 (SNAI2) from Homo sapiens (Human).